An 895-amino-acid polypeptide reads, in one-letter code: Androgen receptor (895 aa).

Residues Met1–Lys533 are modulating. The segment at Met1–Ala562 is interaction with ZNF318. Disordered regions lie at residues Val33 to Leu150 and Gln178 to Gly211. Low complexity-rich tracts occupy residues Ala44–Gln81 and Gln178–Ala200. A Phosphoserine; by CDK9 modification is found at Ser65. Phosphoserine is present on Ser79. The segment covering Pro201–Gly211 has biased composition (polar residues). A Phosphotyrosine; by CSK modification is found at Tyr208. Ser241 carries the phosphoserine modification. Phosphotyrosine; by CSK and TNK2 is present on Tyr252. Phosphotyrosine; by CSK occurs at positions 292, 331, 342, and 347. Residue Tyr348 is modified to Phosphotyrosine; by CSK and TNK2. Lys371 participates in a covalent cross-link: Glycyl lysine isopeptide (Lys-Gly) (interchain with G-Cter in SUMO). Position 378 is a phosphotyrosine; by CSK (Tyr378). Residue Lys496 forms a Glycyl lysine isopeptide (Lys-Gly) (interchain with G-Cter in SUMO) linkage. A phosphotyrosine; by CSK mark is found at Tyr510 and Tyr527. The tract at residues Tyr527–Thr894 is interaction with LPXN. The nuclear receptor DNA-binding region spans Thr534–Leu607. 2 NR C4-type zinc fingers span residues Cys535–Cys555 and Cys571–Cys595. The interval Tyr547–Val637 is interaction with HIPK3. Residues Gln567–Thr894 are interaction with CCAR1. An interaction with KAT7 region spans residues Met600–Thr894. At Ser626 the chain carries Phosphoserine; by STK4/MST1. Residues Glu644–Ile875 enclose the NR LBD domain. Residues Asn681 and Arg728 each contribute to the 17beta-hydroxy-5alpha-androstan-3-one site. Glycyl lysine isopeptide (Lys-Gly) (interchain with G-Cter in ubiquitin) cross-links involve residues Lys821 and Lys823. Thr853 contacts 17beta-hydroxy-5alpha-androstan-3-one. Position 891 is a phosphotyrosine; by CSK (Tyr891).

The protein belongs to the nuclear hormone receptor family. NR3 subfamily. As to quaternary structure, binds DNA as a homodimer. Part of a ternary complex containing AR, EFCAB6/DJBP and PARK7. Interacts with HIPK3 and NR0B2 in the presence of androgen. The ligand binding domain interacts with KAT7/HBO1 in the presence of dihydrotestosterone. Interacts with EFCAB6/DJBP, PQBP1, RANBP9, RBAK, SPDEF, SRA1, TGFB1I1 and RREB1. Interacts with ZMIZ1/ZIMP10 and ZMIZ2/ZMIP7 which both enhance its transactivation activity. Interacts with SLC30A9 and RAD54L2/ARIP4. Interacts with MACROD1 (via macro domain). Interacts via the ligand-binding domain with LXXLL and FXXLF motifs from NCOA1, NCOA2, NCOA3 and MAGEA11. Interacts (via nuclear receptor DNA binding domain and nuclear receptor ligand binding domain) with NCOA4. The AR N-terminal poly-Gln region binds Ran resulting in enhancement of AR-mediated transactivation. Ran-binding decreases as the poly-Gln length increases. Interacts with HIP1 (via coiled coil domain). Interacts (via ligand-binding domain) with TRIM68. Interacts with TNK2. Interacts with USP26. Interacts with RNF6. Interacts (regulated by RNF6 probably through polyubiquitination) with RNF14; regulates AR transcriptional activity. Interacts with PRMT2 and TRIM24. Interacts with RACK1. Interacts with RANBP10; this interaction enhances dihydrotestosterone-induced AR transcriptional activity. Interacts with PRPF6 in a hormone-independent way; this interaction enhances dihydrotestosterone-induced AR transcriptional activity. Interacts with STK4/MST1. Interacts with ZIPK/DAPK3. Interacts with LPXN. Interacts with MAK. Part of a complex containing AR, MAK and NCOA3. Interacts with CRY1. Interacts with CCAR1 and GATA2. Interacts with ZNF318. Interacts with BUD31. Interacts with ARID4A. Interacts with ARID4B. Interacts (via NR LBD domain) with ZBTB7A; the interaction is direct and androgen-dependent. Interacts with NCOR1. Interacts with NCOR2. Interacts with CRY2 in a ligand-dependent manner. Post-translationally, phosphorylated in prostate cancer cells in response to several growth factors including EGF. Phosphorylation is induced by c-Src kinase (CSK). Tyr-510 is one of the major phosphorylation sites and an increase in phosphorylation and Src kinase activity is associated with prostate cancer progression. Phosphorylation by TNK2 enhances the DNA-binding and transcriptional activity. Phosphorylation at Ser-65 by CDK9 regulates AR promoter selectivity and cell growth. Sumoylated on Lys-371 (major) and Lys-496. Ubiquitinated. Deubiquitinated by USP26. 'Lys-6' and 'Lys-27'-linked polyubiquitination by RNF6 modulates AR transcriptional activity and specificity. In terms of processing, palmitoylated by ZDHHC7 and ZDHHC21. Palmitoylation is required for plasma membrane targeting and for rapid intracellular signaling via ERK and AKT kinases and cAMP generation.

It localises to the nucleus. The protein resides in the cytoplasm. Its function is as follows. Steroid hormone receptors are ligand-activated transcription factors that regulate eukaryotic gene expression and affect cellular proliferation and differentiation in target tissues. Transcription factor activity is modulated by bound coactivator and corepressor proteins like ZBTB7A that recruits NCOR1 and NCOR2 to the androgen response elements/ARE on target genes, negatively regulating androgen receptor signaling and androgen-induced cell proliferation. Transcription activation is also down-regulated by NR0B2. Activated, but not phosphorylated, by HIPK3 and ZIPK/DAPK3. This is Androgen receptor (AR) from Macaca mulatta (Rhesus macaque).